Reading from the N-terminus, the 883-residue chain is MNYFSLTSHKKHRGHPSAGPSNAYQNLEKTSVLQETRTFNETPVNPRKCIHILTKILYLINQGEQLVAREATDCFFAMTKLFQSKDVVLRRMVYLGIKELSSIAEDVIIVTSSLTKDMTGKEDLYRAAAIRALCSITDNTMLQAVERYMKQCIVDKNAAVSCAALVSSLRLANTAGDVVKRWANEAQEALNSDNIMVQYHALGLLYHIRKSDRLAVSKLVNKLTRGSLKSPYAVCMLIRIACKLIEEEDIPSEELSDSPLFTFIESCLRHKSEMVIYEAAHAIVNLKNTNPRMLSPAFSILQLFCSSPKATLRFAAVRTLNKVAMTHPAAVTTCNLDLEGLITDSNRSVATLAITTLLKTGAESSVERLMKQISTFVAEISDEFKVVVVQAICALCTKYPRKHTVLMNFLSGMLREEGGLEYKTSIVDTIITIIEENADAKESGLSHLCEFIEDCEHVSLAVRILHLLGKEGPFAATPSKYIRFIYNRVILESPIVRAAAVTAMAQFGASCPALLSNILVLLGRCQMDPDDEVRDRATYYLSILNSERPELYKNYIIERENCSLALLEKSLVEHLNGDVDTRFDISIVPKAAIVKPVIANDVMLVTSSAPRPPKITREEESAARLAQLPGIQVLGPIHRSTAPIQLTESETEYTVQCIKHIFGQHVVFQFDCLNTLSDQILENVRVELTLPEGFTTRAVIPCPKLPYNDLQTTFVIVEFPPDAANSIATFGATLRFVVKDCDPNTGEPESEEGYDDEYMLEDLELTVADQIQKTRKNNFQVSWDAADSEEWLQAEDTFVLSAVTTLQDAVNTIVKILGLGAANLSENVPEGTHLHTLLCSGTFRGGAEILVRAKLALSEGVTLNLTVRSTDQDVAELITAAIG.

The segment at 1 to 25 (MNYFSLTSHKKHRGHPSAGPSNAYQ) is disordered. HEAT repeat units follow at residues 69 to 106 (REAT…IAED), 292 to 329 (RMLS…THPA), 331 to 364 (VTTC…GAES), 365 to 401 (SVER…KYPR), 404 to 439 (TVLM…ENAD), and 476 to 513 (ATPS…SCPA).

Belongs to the COPG family. Oligomeric complex that consists of at least the alpha, beta, beta', gamma, delta, epsilon and zeta subunits. In terms of tissue distribution, expressed in ovary, testis, testis tip, young spermatocytes, germ cells and follicle cells. Up-regulated expression within centrally to posteriorly located germarial cysts and in migrating follicle cells. Widespread expression in imaginal disks including eye-antennal disk, wing disk, third leg and haltere disk.

The protein resides in the cytoplasm. The protein localises to the golgi apparatus membrane. Its subcellular location is the cytoplasmic vesicle. It localises to the COPI-coated vesicle membrane. It is found in the endoplasmic reticulum. In terms of biological role, the coatomer is a cytosolic protein complex that binds to dilysine motifs and reversibly associates with Golgi non-clathrin-coated vesicles, which further mediate biosynthetic protein transport from the ER, via the Golgi up to the trans Golgi network. Coatomer complex is required for budding from Golgi membranes, and is essential for the retrograde Golgi-to-ER transport of dilysine-tagged proteins. Required for limiting lipid storage in lipid droplets. Involved in the expansion of luminal extracellular matrices and apical membrane during tubulogenesis. Required in the tracheal epithelium for luminal protein secretion and diametric tube growth. In salivary glands, required for deposition of O-glycans and luminal extracellular matrix assembly. Required for epidermal morphogenesis and cuticle development. In Drosophila melanogaster (Fruit fly), this protein is Coatomer subunit gamma.